The chain runs to 137 residues: Phosphoinositide-interacting protein (137 aa).

2 helical membrane-spanning segments follow: residues 56-76 and 94-114; these read IVIMSVGGAILLFGVVITCLA and PGFLSLGLMMLVCGLVWVPII.

In terms of assembly, interacts with TRPV1.

The protein resides in the membrane. Its function is as follows. Regulatory subunit of TRPV1, a molecular sensor of noxious heat and capsaicin. Positively regulates TRPV1 channel activity via phosphatidylinositol 4,5-bisphosphate (PIP2). Binds various phosphoinositide, including phosphatidylinositol 4,5-bisphosphate (PIP2), but not phosphatidylinositol (PI). The chain is Phosphoinositide-interacting protein (PIRT) from Homo sapiens (Human).